Consider the following 357-residue polypeptide: sn-glycerol-3-phosphate import ATP-binding protein UgpC (357 aa).

The 232-residue stretch at 4–235 folds into the ABC transporter domain; sequence LKLQAVTKSY…PASLFVASFI (232 aa). An ATP-binding site is contributed by 37–44; that stretch reads GPSGCGKS.

It belongs to the ABC transporter superfamily. sn-glycerol-3-phosphate importer (TC 3.A.1.1.3) family. The complex is composed of two ATP-binding proteins (UgpC), two transmembrane proteins (UgpA and UgpE) and a solute-binding protein (UgpB).

It localises to the cell inner membrane. It catalyses the reaction sn-glycerol 3-phosphate(out) + ATP + H2O = sn-glycerol 3-phosphate(in) + ADP + phosphate + H(+). Its function is as follows. Part of the ABC transporter complex UgpBAEC involved in sn-glycerol-3-phosphate (G3P) import. Responsible for energy coupling to the transport system. The chain is sn-glycerol-3-phosphate import ATP-binding protein UgpC from Yersinia pseudotuberculosis serotype I (strain IP32953).